We begin with the raw amino-acid sequence, 362 residues long: UV excision repair protein RAD23 homolog A (362 aa).

The region spanning 1–81 is the Ubiquitin-like domain; sequence MAVTITLKTL…VVVMVTKAKT (81 aa). 2 disordered regions span residues 80 to 160 and 201 to 227; these read KTSP…LVTG and GIPG…TEAG. Residues 88 to 109 are compositionally biased toward low complexity; it reads PSEASPTATPESSTSFPSAPAS. Lys122 participates in a covalent cross-link: Glycyl lysine isopeptide (Lys-Gly) (interchain with G-Cter in ubiquitin). 5 positions are modified to phosphoserine: Ser123, Ser128, Ser133, Ser136, and Ser138. The span at 126–144 shows a compositional bias: low complexity; it reads EESAPTTSPESVSGSVPSS. Residues 161 to 201 form the UBA 1 domain; sequence SEYETMLTEIMSMGYERERVVAALRASYNNPHRAVEYLLTG. A phosphoserine mark is found at Ser205, Ser294, and Ser356. One can recognise a UBA 2 domain in the interval 317–357; sequence PQEKEAIERLKALGFPESLVIQAYFACEKNENLAANFLLSQ.

This sequence belongs to the RAD23 family. As to quaternary structure, interacts with XPC; the interaction is suggesting the existence of a functional equivalent variant XPC complex. Interacts with PSMD4 and PSMC5. Interacts with ATXN3. Interacts with UBQLN2.

It localises to the nucleus. Its function is as follows. Multiubiquitin chain receptor involved in modulation of proteasomal degradation. Binds to 'Lys-48'-linked polyubiquitin chains in a length-dependent manner and with a lower affinity to 'Lys-63'-linked polyubiquitin chains. Proposed to be capable to bind simultaneously to the 26S proteasome and to polyubiquitinated substrates and to deliver ubiquitinated proteins to the proteasome. Involved in nucleotide excision repair and is thought to be functional equivalent for RAD23B in global genome nucleotide excision repair (GG-NER) by association with XPC. In vitro, XPC:RAD23A dimer has NER activity. Can stabilize XPC. The sequence is that of UV excision repair protein RAD23 homolog A (RAD23A) from Bos taurus (Bovine).